The sequence spans 340 residues: tRNA N6-adenosine threonylcarbamoyltransferase (340 aa).

Fe cation is bound by residues His-113 and His-117. Substrate-binding positions include 135 to 139 (LVSGG), Asp-169, Gly-182, Asp-186, and Asn-274. Asp-302 provides a ligand contact to Fe cation.

Belongs to the KAE1 / TsaD family. Fe(2+) is required as a cofactor.

It is found in the cytoplasm. It catalyses the reaction L-threonylcarbamoyladenylate + adenosine(37) in tRNA = N(6)-L-threonylcarbamoyladenosine(37) in tRNA + AMP + H(+). In terms of biological role, required for the formation of a threonylcarbamoyl group on adenosine at position 37 (t(6)A37) in tRNAs that read codons beginning with adenine. Is involved in the transfer of the threonylcarbamoyl moiety of threonylcarbamoyl-AMP (TC-AMP) to the N6 group of A37, together with TsaE and TsaB. TsaD likely plays a direct catalytic role in this reaction. This is tRNA N6-adenosine threonylcarbamoyltransferase from Mycolicibacterium vanbaalenii (strain DSM 7251 / JCM 13017 / BCRC 16820 / KCTC 9966 / NRRL B-24157 / PYR-1) (Mycobacterium vanbaalenii).